Here is a 194-residue protein sequence, read N- to C-terminus: Peptidyl-tRNA hydrolase (194 aa).

Tyr17 lines the tRNA pocket. His22 (proton acceptor) is an active-site residue. 3 residues coordinate tRNA: Phe68, Asn70, and Asn116.

This sequence belongs to the PTH family. Monomer.

It is found in the cytoplasm. The catalysed reaction is an N-acyl-L-alpha-aminoacyl-tRNA + H2O = an N-acyl-L-amino acid + a tRNA + H(+). Functionally, hydrolyzes ribosome-free peptidyl-tRNAs (with 1 or more amino acids incorporated), which drop off the ribosome during protein synthesis, or as a result of ribosome stalling. In terms of biological role, catalyzes the release of premature peptidyl moieties from peptidyl-tRNA molecules trapped in stalled 50S ribosomal subunits, and thus maintains levels of free tRNAs and 50S ribosomes. The protein is Peptidyl-tRNA hydrolase of Actinobacillus pleuropneumoniae serotype 5b (strain L20).